The primary structure comprises 671 residues: Sodium, potassium, lithium and rubidium/H(+) antiporter (671 aa).

The next 11 helical transmembrane spans lie at 7 to 29 (VLVL…FIPV), 46 to 66 (GLHI…PLLF), 83 to 103 (PILL…GYTI), 110 to 130 (IPLP…VVAV), 156 to 176 (ASGL…AFSI), 182 to 202 (SFVL…FFII), 228 to 248 (FVIY…VVAG), 276 to 296 (IILF…IPDV), 315 to 335 (ILII…LFWA), 364 to 384 (GAVT…GSPF), and 389 to 409 (LIIF…SVLL).

This sequence belongs to the monovalent cation:proton antiporter 1 (CPA1) transporter (TC 2.A.36) family. Nhak (TC 2.A.36.3.2) subfamily.

The protein localises to the cell membrane. Transporter involved in the efflux of sodium, potassium, lithium and rubidium. The chain is Sodium, potassium, lithium and rubidium/H(+) antiporter (nhaK) from Bacillus pumilus (strain SAFR-032).